An 81-amino-acid polypeptide reads, in one-letter code: Photosystem I iron-sulfur center (81 aa).

4Fe-4S ferredoxin-type domains lie at 2 to 31 (SHTV…MVPW) and 39 to 68 (IASS…IRVY). Positions 11, 14, 17, 21, 48, 51, 54, and 58 each coordinate [4Fe-4S] cluster.

In terms of assembly, the cyanobacterial PSI reaction center is composed of one copy each of PsaA,B,C,D,E,F,I,J,K,L,M and X, and forms trimeric complexes. It depends on [4Fe-4S] cluster as a cofactor.

The protein resides in the cellular thylakoid membrane. It catalyses the reaction reduced [plastocyanin] + hnu + oxidized [2Fe-2S]-[ferredoxin] = oxidized [plastocyanin] + reduced [2Fe-2S]-[ferredoxin]. Its function is as follows. Apoprotein for the two 4Fe-4S centers FA and FB of photosystem I (PSI); essential for photochemical activity. FB is the terminal electron acceptor of PSI, donating electrons to ferredoxin. The C-terminus interacts with PsaA/B/D and helps assemble the protein into the PSI complex. Required for binding of PsaD and PsaE to PSI. PSI is a plastocyanin/cytochrome c6-ferredoxin oxidoreductase, converting photonic excitation into a charge separation, which transfers an electron from the donor P700 chlorophyll pair to the spectroscopically characterized acceptors A0, A1, FX, FA and FB in turn. The polypeptide is Photosystem I iron-sulfur center (Mastigocladus laminosus (Fischerella sp.)).